The sequence spans 158 residues: MSEEQGAATDGVILDYDVRKVMAALPHRYPLLLVDRVASLTLNERIHAVKAVSMNEQFFQGHFPGRPIMPGVLQIEALAQAAGVLAVESLGLAGSGKLVYFMAIEDAKFRNPVEPGVLLDLHVEFTQKRSRVCKFSGKAMIGDKVTCEVNFTAMIADS.

His62 is a catalytic residue.

It belongs to the thioester dehydratase family. FabZ subfamily.

The protein localises to the cytoplasm. It catalyses the reaction a (3R)-hydroxyacyl-[ACP] = a (2E)-enoyl-[ACP] + H2O. Its function is as follows. Involved in unsaturated fatty acids biosynthesis. Catalyzes the dehydration of short chain beta-hydroxyacyl-ACPs and long chain saturated and unsaturated beta-hydroxyacyl-ACPs. This is 3-hydroxyacyl-[acyl-carrier-protein] dehydratase FabZ from Novosphingobium aromaticivorans (strain ATCC 700278 / DSM 12444 / CCUG 56034 / CIP 105152 / NBRC 16084 / F199).